The chain runs to 388 residues: Processive diacylglycerol beta-glucosyltransferase (388 aa).

The protein belongs to the glycosyltransferase 28 family. UgtP subfamily.

The protein localises to the cell membrane. It catalyses the reaction a 1,2-diacyl-3-O-(beta-D-glucopyranosyl)-sn-glycerol + UDP-alpha-D-glucose = a 1,2-diacyl-3-O-(beta-D-Glc-(1-&gt;6)-beta-D-Glc)-sn-glycerol + UDP + H(+). The catalysed reaction is a 1,2-diacyl-3-O-(beta-D-Glc-(1-&gt;6)-beta-D-Glc)-sn-glycerol + UDP-alpha-D-glucose = a 1,2-diacyl-3-O-(beta-D-Glc-(1-&gt;6)-beta-D-Glc-(1-&gt;6)-beta-D-Glc)-sn-glycerol + UDP + H(+). The enzyme catalyses a 1,2-diacyl-sn-glycerol + UDP-alpha-D-glucose = a 1,2-diacyl-3-O-(beta-D-glucopyranosyl)-sn-glycerol + UDP + H(+). It participates in glycolipid metabolism; diglucosyl-diacylglycerol biosynthesis. Its function is as follows. Processive glucosyltransferase involved in the biosynthesis of both the bilayer- and non-bilayer-forming membrane glucolipids. Is able to successively transfer up to three glucosyl residues to diacylglycerol (DAG), thereby catalyzing the formation of beta-monoglucosyl-DAG (3-O-(beta-D-glucopyranosyl)-1,2-diacyl-sn-glycerol), beta-diglucosyl-DAG (3-O-(beta-D-glucopyranosyl-beta-(1-&gt;6)-D-glucopyranosyl)-1,2-diacyl-sn-glycerol) and beta-triglucosyl-DAG (3-O-(beta-D-glucopyranosyl-beta-(1-&gt;6)-D-glucopyranosyl-beta-(1-&gt;6)-D-glucopyranosyl)-1,2-diacyl-sn-glycerol). Beta-diglucosyl-DAG is the predominant glycolipid found in Bacillales and is also used as a membrane anchor for lipoteichoic acid (LTA). In Bacillus cytotoxicus (strain DSM 22905 / CIP 110041 / 391-98 / NVH 391-98), this protein is Processive diacylglycerol beta-glucosyltransferase.